A 636-amino-acid chain; its full sequence is Carbon monoxide dehydrogenase 1 (636 aa).

[4Fe-4S] cluster is bound by residues C38, C46, C47, C50, C55, and C69. [Ni-4Fe-5S] cluster is bound by residues H262, C297, C335, C448, C478, and C528.

It belongs to the Ni-containing carbon monoxide dehydrogenase family. In terms of assembly, homodimer. [4Fe-4S] cluster serves as cofactor. [Ni-4Fe-5S] cluster is required as a cofactor.

The protein resides in the cytoplasm. It is found in the cell membrane. It catalyses the reaction CO + 2 oxidized [2Fe-2S]-[ferredoxin] + H2O = 2 reduced [2Fe-2S]-[ferredoxin] + CO2 + 2 H(+). Inactivated by O(2). In terms of biological role, CODH oxidizes carbon monoxide coupled, via CooF, to the reduction of a hydrogen cation by a hydrogenase (possibly CooH). The chain is Carbon monoxide dehydrogenase 1 (cooS1) from Carboxydothermus hydrogenoformans (strain ATCC BAA-161 / DSM 6008 / Z-2901).